The sequence spans 133 residues: Small ribosomal subunit protein uS9 (133 aa).

Residues Met101 to Arg133 are disordered. Residues Leu107 to Lys118 show a composition bias toward basic and acidic residues. The segment covering Tyr119–Arg133 has biased composition (basic residues).

The protein belongs to the universal ribosomal protein uS9 family.

This is Small ribosomal subunit protein uS9 from Deinococcus radiodurans (strain ATCC 13939 / DSM 20539 / JCM 16871 / CCUG 27074 / LMG 4051 / NBRC 15346 / NCIMB 9279 / VKM B-1422 / R1).